The chain runs to 406 residues: Probable sphingosine-1-phosphate phosphatase (406 aa).

Transmembrane regions (helical) follow at residues 66–86 (ILGEEVFFILALPISTWCVAT) and 92–112 (LCVVLALTIGGGNILKNTFTL). Residues 107–115 (KNTFTLPRP) are phosphatase sequence motif I. The phosphatase sequence motif II stretch occupies residues 133–136 (PSTH). Residue His-136 is the Proton donor of the active site. The next 2 helical transmembrane spans lie at 138–158 (ASAFGLTFYFLIYTYFLFPTI) and 162–182 (FNISLLSMFFIVLFWSTSVMF). The segment at 183 to 194 (SRLYNGHHTPMD) is phosphatase sequence motif III. The active-site Nucleophile is His-190. The next 5 membrane-spanning stretches (helical) occupy residues 193 to 213 (MDVIAGLIVAITSILATTYQL), 225 to 245 (TFLFGPMLYIAILSAILFFHP), 254 to 274 (AYPETGLVCGASLGSLISLWL), 313 to 333 (ILIGLVLVGIAKVFSKKFFFF), and 374 to 394 (LFVYTCVSFTIVSMPYLFYYL).

Belongs to the type 2 lipid phosphate phosphatase family.

It localises to the endoplasmic reticulum membrane. Functionally, has enzymatic activity against both sphingosine 1 phosphate (S1P) and dihydro-S1P. Regulates intracellular and extracellular S1P levels. The polypeptide is Probable sphingosine-1-phosphate phosphatase (sppA) (Dictyostelium discoideum (Social amoeba)).